We begin with the raw amino-acid sequence, 416 residues long: Argininosuccinate synthase (416 aa).

ATP contacts are provided by residues 19–27 (AYSGGLDTS) and A46. Residues Y97 and S102 each contribute to the L-citrulline site. G127 is an ATP binding site. The L-aspartate site is built by T129, N133, and D134. N133 lines the L-citrulline pocket. L-citrulline is bound by residues R137, S188, S197, E273, and Y285.

The protein belongs to the argininosuccinate synthase family. Type 1 subfamily. As to quaternary structure, homotetramer.

Its subcellular location is the cytoplasm. It catalyses the reaction L-citrulline + L-aspartate + ATP = 2-(N(omega)-L-arginino)succinate + AMP + diphosphate + H(+). The protein operates within amino-acid biosynthesis; L-arginine biosynthesis; L-arginine from L-ornithine and carbamoyl phosphate: step 2/3. The polypeptide is Argininosuccinate synthase (Granulibacter bethesdensis (strain ATCC BAA-1260 / CGDNIH1)).